Here is a 618-residue protein sequence, read N- to C-terminus: Transport protein particle subunit trs85-2 (618 aa).

The protein belongs to the TRS85 family. As to quaternary structure, part of the multisubunit TRAPP (transport protein particle) complexes I and II.

It is found in the golgi apparatus. The protein localises to the cis-Golgi network. Its function is as follows. Component of the TRAPP I and TRAPP II complexes. TRAPP I plays a key role in the late stages of endoplasmic reticulum to Golgi traffic. TRAPP II seems to play a role in intra-Golgi transport. Has a role late in meiosis following DNA replication. The sequence is that of Transport protein particle subunit trs85-2 (trs85-2) from Schizosaccharomyces pombe (strain 972 / ATCC 24843) (Fission yeast).